The following is a 68-amino-acid chain: Figainin 1 (68 aa).

The first 22 residues, methionine 1–glycine 22, serve as a signal peptide directing secretion. Residues glutamate 23 to asparagine 45 are disordered. Residues glutamate 23–glutamate 47 constitute a propeptide that is removed on maturation. Positions lysine 26 to asparagine 42 are enriched in acidic residues. Position 67 is a lysine amide (lysine 67).

As to expression, expressed by the skin glands.

It is found in the secreted. Antimicrobial peptide that displays antibacterial and antiprotozoal activity. Exhibits antibacterial activity against the Gram-positive bacteria S.epidermidis ATCC 12228 (MIC=2 uM), E.casseliflavus ATCC 700327 (MIC=16 uM), S.aureus ATCC 25923 (MIC=4 uM) and E.faecalis ATCC 29212 (MIC=8 uM), and the Gram-negative bacteria E.coli ATCC 25922 (MIC=16 uM) and K.pneumoniae ATCC 13883 (MIC=4 uM). Displays antiprotozoal activity against the epimastigote form of T.cruzi (IC(50)=15.9 uM). Does not show antimicrobial activity against the Gram-negative bacterium P.aeruginosa ATCC 27853, or the fungi C.albicans ATCC 90028 and C.parapsilosis ATCC 22019. Shows high cytolytic activity against human erythrocytes (HC(50)=10 uM), and displays anti-proliferative effects against various cancer cell lines including MCF-7 breast cancer cells (IC(50)=13.7 uM), HeLa cervical adenocarcinoma cells (IC(50)=11.1 uM) and B16F10 murine melanoma cells (IC(50)=10.5 uM). The sequence is that of Figainin 1 from Boana raniceps (Chaco tree frog).